Here is a 163-residue protein sequence, read N- to C-terminus: MVFVKTLNRTLYLEVAANEDVLSIKQKIEAAEGIPSAEQRLVFAGRQLEDSDCGLDAEATIYVNLELLGGAKKRKKKVYTTPKKNKRKPKKVKLAVLKYYKVDENGKITRLRKECQQPSCGGGVFMAQHANRHYCGRCHDTLVVDTATAAATSGEKGGKKGKK.

The Ubiquitin-like domain maps to 1-70; the sequence is MVFVKTLNRT…IYVNLELLGG (70 aa). Gly70 is covalently cross-linked (Glycyl lysine isopeptide (Gly-Lys) (interchain with K-? in acceptor proteins)). The C4-type zinc finger occupies 115 to 138; it reads CQQPSCGGGVFMAQHANRHYCGRC.

This sequence in the N-terminal section; belongs to the ubiquitin family. The protein in the C-terminal section; belongs to the eukaryotic ribosomal protein eS31 family.

The chain is Ubiquitin-like protein 1-ribosomal protein eS31 fusion protein (ubl-1) from Caenorhabditis briggsae.